The primary structure comprises 155 residues: Small ribosomal subunit protein uS7 (155 aa).

Belongs to the universal ribosomal protein uS7 family. As to quaternary structure, part of the 30S ribosomal subunit. Contacts proteins S9 and S11.

Its function is as follows. One of the primary rRNA binding proteins, it binds directly to 16S rRNA where it nucleates assembly of the head domain of the 30S subunit. Is located at the subunit interface close to the decoding center, probably blocks exit of the E-site tRNA. The chain is Small ribosomal subunit protein uS7 from Mycoplasma pneumoniae (strain ATCC 29342 / M129 / Subtype 1) (Mycoplasmoides pneumoniae).